Consider the following 601-residue polypeptide: CDPK-related kinase 5 (601 aa).

Positions 1–19 (MGLCTSKPNSSNSDQTPAR) are enriched in polar residues. Disordered stretches follow at residues 1-55 (MGLC…KSPF) and 70-98 (KKTP…PPPS). Gly-2 carries the N-myristoyl glycine lipid modification. Low complexity predominate over residues 26–35 (SESVKPSSSS). Residues 36–48 (VNGEDQCVTTTNN) are compositionally biased toward polar residues. The region spanning 148-410 (YELGDEVGRG…AAQALSHPWI (263 aa)) is the Protein kinase domain. Residues 154 to 162 (VGRGHFGYT) and Lys-180 contribute to the ATP site. Asp-276 serves as the catalytic Proton acceptor. At Ser-316 the chain carries Phosphoserine. Residues 415-445 (DAKVPMDILVFKLMRAYLRSSSLRKAALRAL) are autoinhibitory domain. The calmodulin binding (CaMBD) stretch occupies residues 434-454 (SSSLRKAALRALSKTLTVDEL). EF-hand domains are found at residues 452 to 488 (DELF…ATDA), 489 to 524 (MKDS…VHQL), 525 to 564 (EALD…GPSV), and 567 to 596 (HAVL…VSSR). Residues Ser-467, Asn-469, Thr-471, Asn-476, Arg-508, Glu-513, Asn-546, Glu-553, Asp-578, and Lys-580 each contribute to the Ca(2+) site. Ser-582 carries the post-translational modification Phosphoserine.

The protein belongs to the protein kinase superfamily. Ser/Thr protein kinase family. CDPK subfamily. Binds calmodulin (CaM) in a calcium-dependent manner.

Its subcellular location is the membrane. It catalyses the reaction L-seryl-[protein] + ATP = O-phospho-L-seryl-[protein] + ADP + H(+). It carries out the reaction L-threonyl-[protein] + ATP = O-phospho-L-threonyl-[protein] + ADP + H(+). Activated by calcium and calmodulin. Autophosphorylation may play an important role in the regulation of the kinase activity. In terms of biological role, may play a role in signal transduction pathways that involve calcium as a second messenger. This Arabidopsis thaliana (Mouse-ear cress) protein is CDPK-related kinase 5 (CRK5).